The chain runs to 538 residues: Protein BFR2 (538 aa).

Residues 1–239 form a disordered region; that stretch reads MVKAKGRAKE…AKPMMAALST (239 aa). Residues 7–23 are compositionally biased toward basic and acidic residues; it reads RAKEFQDPDEPITKDYD. 2 stretches are compositionally biased toward acidic residues: residues 80-105 and 172-222; these read LEEE…PETA and DSED…DEED. Positions 290 to 363 form a coiled coil; it reads YEAAEEAAIK…KWSRKVQSVN (74 aa).

It belongs to the AATF family.

The protein localises to the nucleus. It is found in the nucleolus. In Gibberella zeae (strain ATCC MYA-4620 / CBS 123657 / FGSC 9075 / NRRL 31084 / PH-1) (Wheat head blight fungus), this protein is Protein BFR2 (BFR2).